A 296-amino-acid chain; its full sequence is 4-hydroxybenzoate octaprenyltransferase (296 aa).

Helical transmembrane passes span 28–48 (PIGIYLLLWPTLVAVWIAGNG), 55–75 (VLIFALGVVLMRAAGCCINDF), 102–122 (AVMLFALLVGVSFLLVLCTNA), 145–167 (TYYPQVVLGAAYSWGIPMAFTAA), 174–196 (SAWLLYIANLLWTVGYDTYYAMV), 219–239 (VIILTLQLLSLGCLLLAGNRF), 241–261 (LGGWYHLGLLAAAACFAWEFW), and 275–295 (FLHNHWAGMLIFIGVVLDYAL).

The protein belongs to the UbiA prenyltransferase family. Mg(2+) is required as a cofactor.

The protein localises to the cell inner membrane. It catalyses the reaction all-trans-octaprenyl diphosphate + 4-hydroxybenzoate = 4-hydroxy-3-(all-trans-octaprenyl)benzoate + diphosphate. Its pathway is cofactor biosynthesis; ubiquinone biosynthesis. In terms of biological role, catalyzes the prenylation of para-hydroxybenzoate (PHB) with an all-trans polyprenyl group. Mediates the second step in the final reaction sequence of ubiquinone-8 (UQ-8) biosynthesis, which is the condensation of the polyisoprenoid side chain with PHB, generating the first membrane-bound Q intermediate 3-octaprenyl-4-hydroxybenzoate. In Pseudomonas entomophila (strain L48), this protein is 4-hydroxybenzoate octaprenyltransferase.